The following is a 636-amino-acid chain: MSATHKMRYNLQLVLPSNTRARWAWLLLLLSNPAAVLAKCASDYFVHSLPGQPEGSVLKMHAGHIEIDSEHKGNLFFWHYQNRHIANRQRTVIWLNGGPGCSSMDGALMEVGPYRLKDDHSLVYNEGSWDEFANLLFVDQPVGTGFSYVSTDSYVHELGPMADQFIIFLDRWFKLFPEYENDDIYLAGESYAGQYIPYIAKAIVKRNEKLPANQTAWNVEGLIIGNGWIAPNEQYRSYLTYAYKEGILKESSEGAQAAEAQLSQCSSKLSEVGKFGIHIDECERVMELILDTTKINGKCLNMYDIRLDDTSDSCGMNWPPDISSVTTYLRRPDVVKALNINEDKTTGWRECSPGVGRNLRATESVPSIQLLPGLLEGGIPVLLFSGDKDLICNHVGTEDLIQNMKWSRGTGFELSPGVRAPRHDWVFEGLPAGVYQQARNLTYVKFYNASHMVPFDFPRRSRDMLDRFLGVDITTIGGDPADSRIDGLKGTITSVGAHPNSTTAEEREKEKMKIAAWQAYYKSGEIALIVVAIAATIWGFFVWRSKRREQGGEYQGIYPNLESLSSSSLSTFRSKRRGRHDIESTSRSDEAELESLYNGPEISEVLETQDGRQRELSADGSNEKASASLMVERNLR.

An N-terminal signal peptide occupies residues 1–38 (MSATHKMRYNLQLVLPSNTRARWAWLLLLLSNPAAVLA). At 39 to 522 (KCASDYFVHS…KIAAWQAYYK (484 aa)) the chain is on the lumenal side. Ser-190 is a catalytic residue. Asn-213 carries an N-linked (GlcNAc...) asparagine glycan. The active site involves Asp-389. Asn-440 and Asn-448 each carry an N-linked (GlcNAc...) asparagine glycan. His-451 is a catalytic residue. Asn-500 is a glycosylation site (N-linked (GlcNAc...) asparagine). A helical membrane pass occupies residues 523-543 (SGEIALIVVAIAATIWGFFVW). Residues 544-636 (RSKRREQGGE…ASLMVERNLR (93 aa)) lie on the Cytoplasmic side of the membrane. The interval 575 to 636 (KRRGRHDIES…ASLMVERNLR (62 aa)) is disordered. Positions 580–590 (HDIESTSRSDE) are enriched in basic and acidic residues.

The protein belongs to the peptidase S10 family.

The protein localises to the golgi apparatus. It is found in the trans-Golgi network membrane. The catalysed reaction is Preferential release of a C-terminal arginine or lysine residue.. Functionally, protease with a carboxypeptidase B-like function involved in the C-terminal processing of the lysine and arginine residues from protein precursors. Promotes cell fusion and is involved in the programmed cell death. The polypeptide is Pheromone-processing carboxypeptidase KEX1 (KEX1) (Arthroderma otae (strain ATCC MYA-4605 / CBS 113480) (Microsporum canis)).